A 366-amino-acid chain; its full sequence is Ribosome-binding ATPase YchF (366 aa).

Residues 3–259 (LTAGIVGLPN…LEGEEKQMFL (257 aa)) form the OBG-type G domain. 12–17 (NVGKST) provides a ligand contact to ATP. S16 and T36 together coordinate Mg(2+). The TGS domain occupies 281–364 (GLATYFTAGE…QDGDVIHFRF (84 aa)).

It belongs to the TRAFAC class OBG-HflX-like GTPase superfamily. OBG GTPase family. YchF/OLA1 subfamily. Mg(2+) is required as a cofactor.

Functionally, ATPase that binds to both the 70S ribosome and the 50S ribosomal subunit in a nucleotide-independent manner. This is Ribosome-binding ATPase YchF from Bacillus subtilis (strain 168).